A 332-amino-acid polypeptide reads, in one-letter code: Ribosomal RNA small subunit methyltransferase C (332 aa).

It belongs to the methyltransferase superfamily. RsmC family. Monomer.

Its subcellular location is the cytoplasm. The catalysed reaction is guanosine(1207) in 16S rRNA + S-adenosyl-L-methionine = N(2)-methylguanosine(1207) in 16S rRNA + S-adenosyl-L-homocysteine + H(+). In terms of biological role, specifically methylates the guanine in position 1207 of 16S rRNA in the 30S particle. The polypeptide is Ribosomal RNA small subunit methyltransferase C (Pseudomonas aeruginosa (strain UCBPP-PA14)).